An 818-amino-acid chain; its full sequence is Probable helicase MAGATAMA 3 (818 aa).

The 301-residue stretch at 259–559 (NKSQKEAIDV…KMLKTQYRMH (301 aa)) folds into the UvrD-like helicase ATP-binding domain. Position 280 to 287 (280 to 287 (GPPGTGKT)) interacts with ATP. 2 stretches are compositionally biased toward acidic residues: residues 781 to 790 (PDAPLYEDES) and 798 to 818 (GDDDFGDGDADQDDVAMAGED). Residues 781–818 (PDAPLYEDESLPVAPYGGDDDFGDGDADQDDVAMAGED) are disordered.

Belongs to the helicase family. In terms of tissue distribution, expressed in flowers, siliques, leaves, roots and shoot apex.

The protein resides in the nucleus. Probable helicase that may regulate RNA molecules involved in nucleolar organization and pollen tube guidance. This is Probable helicase MAGATAMA 3 (MAA3) from Arabidopsis thaliana (Mouse-ear cress).